The sequence spans 224 residues: Na(+)-translocating NADH-quinone reductase subunit D (224 aa).

5 consecutive transmembrane segments (helical) span residues 43–63 (TVMA…ISMI), 67–87 (IPSS…VIVV), 104–124 (VFVG…AFAM), 132–152 (FFDG…LGFV), and 179–199 (NGLL…IWAL).

It belongs to the NqrDE/RnfAE family. Composed of six subunits; NqrA, NqrB, NqrC, NqrD, NqrE and NqrF.

It is found in the cell inner membrane. It carries out the reaction a ubiquinone + n Na(+)(in) + NADH + H(+) = a ubiquinol + n Na(+)(out) + NAD(+). NQR complex catalyzes the reduction of ubiquinone-1 to ubiquinol by two successive reactions, coupled with the transport of Na(+) ions from the cytoplasm to the periplasm. NqrA to NqrE are probably involved in the second step, the conversion of ubisemiquinone to ubiquinol. This chain is Na(+)-translocating NADH-quinone reductase subunit D, found in Pseudomonas aeruginosa (strain LESB58).